Here is a 399-residue protein sequence, read N- to C-terminus: Methylthioribose kinase (399 aa).

ATP is bound by residues asparagine 40, lysine 57, and 111–113; that span reads EDL. Residue aspartate 229 coordinates substrate. 246–248 contributes to the ATP binding site; the sequence is DAE. Arginine 344 contacts substrate.

The protein belongs to the methylthioribose kinase family. In terms of assembly, homodimer.

It carries out the reaction 5-(methylsulfanyl)-D-ribose + ATP = 5-(methylsulfanyl)-alpha-D-ribose 1-phosphate + ADP + H(+). The protein operates within amino-acid biosynthesis; L-methionine biosynthesis via salvage pathway; S-methyl-5-thio-alpha-D-ribose 1-phosphate from S-methyl-5'-thioadenosine (hydrolase route): step 2/2. In terms of biological role, catalyzes the phosphorylation of methylthioribose into methylthioribose-1-phosphate. The protein is Methylthioribose kinase of Enterobacter sp. (strain 638).